The following is a 507-amino-acid chain: WD repeat-containing protein fzy-1 (507 aa).

2 disordered regions span residues 1 to 39 (MNNK…NTNL) and 74 to 95 (NKEN…SVEG). 2 stretches are compositionally biased toward polar residues: residues 15 to 24 (VRSSAQQNGL) and 74 to 86 (NKEN…SEPN). WD repeat units follow at residues 219–258 (TNEG…TTEY), 313–352 (GHCR…GSTV), 364–406 (EHTG…QKVR), and 411–450 (CETG…KLSH).

It belongs to the WD repeat CDC20/Fizzy family.

The protein localises to the chromosome. The protein resides in the cytoplasm. Its function is as follows. Plays a role in metaphase-anaphase transition during meiosis I. Required for embryonic anterior-posterior axis formation. The protein is WD repeat-containing protein fzy-1 of Caenorhabditis elegans.